The chain runs to 337 residues: Glyceraldehyde-3-phosphate dehydrogenase 2 (337 aa).

NADP(+)-binding positions include 11–12 (RI), aspartate 35, arginine 80, and threonine 122. D-glyceraldehyde 3-phosphate is bound by residues 153–155 (SCT), threonine 184, arginine 199, 212–213 (TG), and arginine 235. Residue cysteine 154 is the Nucleophile of the active site. Asparagine 317 serves as a coordination point for NADP(+).

As to quaternary structure, homotetramer.

The protein localises to the cytoplasm. It carries out the reaction D-glyceraldehyde 3-phosphate + phosphate + NADP(+) = (2R)-3-phospho-glyceroyl phosphate + NADPH + H(+). The enzyme catalyses D-glyceraldehyde 3-phosphate + phosphate + NAD(+) = (2R)-3-phospho-glyceroyl phosphate + NADH + H(+). The protein operates within carbohydrate biosynthesis; Calvin cycle. Functionally, gap2 has a major role in carbon fixation as a component of the Calvin cycle. Catalyzes the oxidative phosphorylation of glyceraldehyde 3-phosphate (G3P) to 1,3-bisphosphoglycerate (BPG) using the cofactor NADP. The first reaction step involves the formation of a hemiacetal intermediate between G3P and a cysteine residue, and this hemiacetal intermediate is then oxidized to a thioester, with concomitant reduction of NADP to NADPH. The reduced NADPH is then exchanged with the second NAD, and the thioester is attacked by a nucleophilic inorganic phosphate to produce BPG. The polypeptide is Glyceraldehyde-3-phosphate dehydrogenase 2 (gap2) (Nostoc sp. (strain PCC 7120 / SAG 25.82 / UTEX 2576)).